The chain runs to 621 residues: DNA mismatch repair protein MutL (621 aa).

Belongs to the DNA mismatch repair MutL/HexB family.

Functionally, this protein is involved in the repair of mismatches in DNA. It is required for dam-dependent methyl-directed DNA mismatch repair. May act as a 'molecular matchmaker', a protein that promotes the formation of a stable complex between two or more DNA-binding proteins in an ATP-dependent manner without itself being part of a final effector complex. This Petrotoga mobilis (strain DSM 10674 / SJ95) protein is DNA mismatch repair protein MutL.